The primary structure comprises 139 residues: Non-structural protein 1 (139 aa).

Residues aspartate 136–proline 139 carry the DLNP; interaction with MAP1B motif.

This sequence belongs to the pneumovirus non-structural protein 1 family. In terms of assembly, monomer. Homomultimer. Heteromultimer with NS2. Interacts with the matrix protein M. Interacts with host ELOC and CUL2; this interaction allows NS1 to form an active E3 ligase with ELOC and CUL2. Interacts with host IRF3; this interaction leads to the disrupted association of IRF3 with CREBBP and thus reduced binding of IRF3 to the IFN-beta promoter. Interacts with host MAVS; this interaction prevents MAVS binding to RIGI and inhibits signaling pathway leading to interferon production. Interacts with host MAP1B/microtubule-associated protein 1B. Interacts with host TRIM25 (via SPRY domain); this interaction suppresses RIGI ubiquitination and results in decreased interaction between RIGI and MAVS.

The protein localises to the host cytoplasm. It localises to the host mitochondrion. Its subcellular location is the host nucleus. Functionally, plays a major role in antagonizing the type I IFN-mediated antiviral response by degrading or inhibiting multiple cellular factors required for either IFN induction or response pathways. Acts cooperatively with NS2 to repress activation and nuclear translocation of host IFN-regulatory factor IRF3. Also disrupts the association of IRF3 with CREBBP. Interacts with host mitochondrial-associated membrane (MAM) MAVS and prevents the interaction with RIGI. Interacts with TRIM25 to suppress TRIM25-mediated RIGI ubiquitination and thereby RIGI-MAVS interaction. Together with NS2, participates in the proteasomal degradation of host STAT2, IRF3, IRF7, TBK1 and RIGI through a NS-degradasome involving CUL2 and Elongin-C. The degradasome requires an intact mitochondrial MAVS. Decreases the levels of host TRAF3 and IKBKE/IKK-epsilon. As functions other than disruptions of the type I IFN-mediated antiviral signaling pathways, induces host SOCS1 and SOCS3 expression. Suppresses premature apoptosis by an NF-kappa-B-dependent, interferon-independent mechanism and thus facilitates virus growth. Additionally, NS1 may serve some inhibitory role in viral transcription and RNA replication. Suppresses proliferation and activation of host CD103+ CD8+ cytotoxic T-lymphocytes and Th17 helper T-lymphocytes. This Homo sapiens (Human) protein is Non-structural protein 1 (1C).